Consider the following 206-residue polypeptide: Ribosomal RNA large subunit methyltransferase E (206 aa).

Residues Gly63, Trp65, Asp83, Asp99, and Asp124 each coordinate S-adenosyl-L-methionine. The active-site Proton acceptor is the Lys164.

The protein belongs to the class I-like SAM-binding methyltransferase superfamily. RNA methyltransferase RlmE family.

The protein resides in the cytoplasm. The catalysed reaction is uridine(2552) in 23S rRNA + S-adenosyl-L-methionine = 2'-O-methyluridine(2552) in 23S rRNA + S-adenosyl-L-homocysteine + H(+). Specifically methylates the uridine in position 2552 of 23S rRNA at the 2'-O position of the ribose in the fully assembled 50S ribosomal subunit. The polypeptide is Ribosomal RNA large subunit methyltransferase E (Buchnera aphidicola subsp. Schizaphis graminum (strain Sg)).